Reading from the N-terminus, the 353-residue chain is MKFALTGGGTGGHLSIAKALAIELEKQGVEAIYLGSTYGQDKEWFENSPLFSERYFFNTQGVVNKSFFKKINSLFLQVKAAFKAKEILKKHQITHTISVGGFSAGPASFASLLNHIPLYIHEQNAIKGSLNRYLSPKAKAVFSSYAFKDKGNHVLTSYPVQNAFFDYARTRAEIKHILFLGGSQGAKAINEFALLNAPKLTKQGIKITHICGSDAHEKMRFFYQELGLLDKIELFAFHNNIIEVMRRADLCVSRAGASSVWELCANGLPTIFIPYPFASNNHQYYNVLEFEKENLCYVVPQNELLPKKLFEVIRKLNQKDDQGNKNLTIISAKLQQKIAKDGAKTIIETILSA.

UDP-N-acetyl-alpha-D-glucosamine contacts are provided by residues 10-12, Asn124, Ser183, and Gln283; that span reads TGG.

The protein belongs to the glycosyltransferase 28 family. MurG subfamily.

Its subcellular location is the cell inner membrane. It catalyses the reaction di-trans,octa-cis-undecaprenyl diphospho-N-acetyl-alpha-D-muramoyl-L-alanyl-D-glutamyl-meso-2,6-diaminopimeloyl-D-alanyl-D-alanine + UDP-N-acetyl-alpha-D-glucosamine = di-trans,octa-cis-undecaprenyl diphospho-[N-acetyl-alpha-D-glucosaminyl-(1-&gt;4)]-N-acetyl-alpha-D-muramoyl-L-alanyl-D-glutamyl-meso-2,6-diaminopimeloyl-D-alanyl-D-alanine + UDP + H(+). Its pathway is cell wall biogenesis; peptidoglycan biosynthesis. Its function is as follows. Cell wall formation. Catalyzes the transfer of a GlcNAc subunit on undecaprenyl-pyrophosphoryl-MurNAc-pentapeptide (lipid intermediate I) to form undecaprenyl-pyrophosphoryl-MurNAc-(pentapeptide)GlcNAc (lipid intermediate II). This Helicobacter pylori (strain P12) protein is UDP-N-acetylglucosamine--N-acetylmuramyl-(pentapeptide) pyrophosphoryl-undecaprenol N-acetylglucosamine transferase.